A 292-amino-acid chain; its full sequence is MTTAITPDKKKLVSPKPTKTTSDKSKTKPRRSSKTSKKRKSKKGLFGCCAKKRKTKRSKKSAKRTKRSAPKKAPKKAPMKAPSKPAAIPQQAQASLQKPIQSGIVDADAKAKTVVPRPPTPIPPTGVKPEPAPRSEPLYQPRSVSSTTPRTSATTGTTEQMVTAPATLPPPSAESKHLPQDPPGDASSPRVQRQYTAEKYSKEDQDDDDQKDLRKSVAYPSHKFFMTQYVKDECRVRRWVYEDSVPLMMESNMKHMLRMASNRIAACQSDKATRCDMMKDLNEMTEILDGNF.

A disordered region spans residues 1–213; that stretch reads MTTAITPDKK…DQDDDDQKDL (213 aa). 2 stretches are compositionally biased toward basic residues: residues 27 to 43 and 50 to 78; these read TKPR…KSKK and AKKR…KKAP. The span at 90-100 shows a compositional bias: polar residues; that stretch reads QQAQASLQKPI. The span at 116–134 shows a compositional bias: pro residues; that stretch reads PRPPTPIPPTGVKPEPAPR. A compositionally biased stretch (low complexity) spans 143–158; the sequence is SVSSTTPRTSATTGTT.

This is an uncharacterized protein from Caenorhabditis elegans.